The sequence spans 180 residues: Early nodulin-16 (180 aa).

Residues 1–22 form the signal peptide; the sequence is MASSSPILLMIIFSMWLLISHS. The 105-residue stretch at 25-129 folds into the Phytocyanin domain; sequence TDYLIGDSHN…GLKLAVVVQN (105 aa). Residue asparagine 67 is glycosylated (N-linked (GlcNAc...) asparagine). An intrachain disulfide couples cysteine 83 to cysteine 117. A glycan (N-linked (GlcNAc...) asparagine) is linked at asparagine 152. A lipid anchor (GPI-anchor amidated serine) is attached at serine 154. Residues 155–180 constitute a propeptide, removed in mature form; that stretch reads GNKGGAAGLGFIMWLGVSLVMMMFLI.

Belongs to the early nodulin-like (ENODL) family. Expressed in developing nodules upon symbiosis with Sinorhizobium meliloti.

It localises to the symbiosome. Its subcellular location is the cell membrane. Functionally, may act as a carbohydrate transporter. This is Early nodulin-16 from Medicago truncatula (Barrel medic).